Consider the following 488-residue polypeptide: Facilitated trehalose transporter Tret1-2 homolog (488 aa).

The Cytoplasmic portion of the chain corresponds to 1-28 (MKILMRADTHVSYSVPAEGPKANFTFSQ). Residues 29 to 49 (VLAALSVSLCSLVVGFVSAYT) traverse the membrane as a helical segment. Residues 50 to 72 (SPALVSMTDRTITSFEVTKDAGS) are Extracellular-facing. A helical transmembrane segment spans residues 73–93 (WVGGIMPLAALAGGITGGPLI). The Cytoplasmic segment spans residues 94–105 (EYLGRRTTILAT). The helical transmembrane segment at 106 to 126 (AVPFIVSSLLIACAVNVIMIL) threads the bilayer. The Extracellular segment spans residues 127-129 (CGR). A helical transmembrane segment spans residues 130 to 150 (FLTGFCVGIASLSLPVYLGET). Over 151–160 (LQPEVRGTLG) the chain is Cytoplasmic. A helical membrane pass occupies residues 161 to 181 (LLPTALGNIGILVCYVAGSFM). A glycan (N-linked (GlcNAc...) asparagine) is linked at Asn-182. Over 182-184 (NWS) the chain is Extracellular. Residues 185-205 (MLAFLGAALPVPFLILMIIIP) form a helical membrane-spanning segment. The Cytoplasmic portion of the chain corresponds to 206 to 268 (ETPRWFVNRG…ELFKRINLKP (63 aa)). A helical membrane pass occupies residues 269-289 (LSISLGLMFFQQFSGINAVIF). The Extracellular portion of the chain corresponds to 290–305 (YTVQIFKDAGSTIDSN). Residues 306–326 (LCTIIVGIVNFFATFMGILLI) form a helical membrane-spanning segment. Residues 327-332 (DRLGRK) lie on the Cytoplasmic side of the membrane. A helical membrane pass occupies residues 333 to 353 (ILLYISDIAMILTLSILGGFF). At 354-372 (YCKAHGPDVSHLGWLPLTC) the chain is on the extracellular side. The chain crosses the membrane as a helical span at residues 373-393 (FVIYILGFSLGFGPIPWLMMG). Residues 394–402 (EILPAKIRG) lie on the Cytoplasmic side of the membrane. A helical transmembrane segment spans residues 403–423 (PAASVVTAFNWFCTFVVTKTF). Over 424-433 (QDLTVAMGAH) the chain is Extracellular. A helical transmembrane segment spans residues 434-454 (GAFWLFGVVCIVGLFFVIICV). Topologically, residues 455–488 (PETRGKSLEEIERKMMGRVPISAVVNIKPFSFNM) are cytoplasmic.

Belongs to the major facilitator superfamily. Sugar transporter (TC 2.A.1.1) family. Trehalose transporter subfamily.

Its subcellular location is the cell membrane. In terms of biological role, fails to transport trehalose. The polypeptide is Facilitated trehalose transporter Tret1-2 homolog (Drosophila simulans (Fruit fly)).